We begin with the raw amino-acid sequence, 530 residues long: MSQLDTTTPSGDYLMALDAGTGSVRAVIFDLNGNQIAAGQAEWLHLPVPDVPGSMEFDLTTNWQLTCQCIRQALHLAKLPASAIRAVAACSMREGIVLYDRSGTPIWACANVDARASREVSELKELHNNGFELEIYQCSGQTLALSAMPRLLWLAHYRPDIYRQAGTLTMISDWLANMLSGELAVDPSNAGTTGMLDLVTRNWQPNLLEMAGLRADILSPVKETGTLLGHVTAKAAQECGLLAGTPVVMGGGDVQLGCLGLGVVHAGQTAVLGGTFWQQVVNLPQPIIDPNMNTRINPHVIPGMVQAESISFFTGLTMRWFRDAFCAEEKLLAQRLGIDTYSLLEDMAARVPAGAYGVMPIFSDVMQFKSWYHAAPSFINLSLDPEKCNKATLFRALEENAAIVSACNLAQIAEFSGVKASSVVFAGGGAKGKLWSQILADVTGVPVKVPVVKEATALGCAIAAGVGVGLYEALDKTGERLVRWEREYIPNTEHKALYQAAKTNWQAVYTDQLGLVDCGLTTSLWKAPGL.

Belongs to the FGGY kinase family.

Its subcellular location is the cytoplasm. The enzyme catalyses (S)-4,5-dihydroxypentane-2,3-dione + ATP = (2S)-2-hydroxy-3,4-dioxopentyl phosphate + ADP + H(+). Its function is as follows. Catalyzes the phosphorylation of autoinducer-2 (AI-2) to phospho-AI-2, which subsequently inactivates the transcriptional regulator LsrR and leads to the transcription of the lsr operon. Phosphorylates the ring-open form of (S)-4,5-dihydroxypentane-2,3-dione (DPD), which is the precursor to all AI-2 signaling molecules, at the C5 position. In Yersinia pestis bv. Antiqua (strain Angola), this protein is Autoinducer-2 kinase.